The following is a 90-amino-acid chain: MFTIDLSIKNTAFPITVQRKTAEDAEAVYQLILAAIRSGNPDIVELKCEGKTEKKIAVRASEISGVQITQKDGVTTSSGRAPGFFALAGE.

It belongs to the UPF0367 family.

The protein is UPF0367 protein Ava_2513 of Trichormus variabilis (strain ATCC 29413 / PCC 7937) (Anabaena variabilis).